The primary structure comprises 393 residues: Branched-chain-amino-acid aminotransferase, mitochondrial (393 aa).

A mitochondrion-targeting transit peptide spans Met-1–Thr-16. Lys-219 carries the post-translational modification N6-(pyridoxal phosphate)lysine. At Thr-315 the chain carries Phosphothreonine.

The protein belongs to the class-IV pyridoxal-phosphate-dependent aminotransferase family. The cofactor is pyridoxal 5'-phosphate.

It is found in the mitochondrion matrix. The catalysed reaction is L-leucine + 2-oxoglutarate = 4-methyl-2-oxopentanoate + L-glutamate. The enzyme catalyses L-isoleucine + 2-oxoglutarate = (S)-3-methyl-2-oxopentanoate + L-glutamate. It catalyses the reaction L-valine + 2-oxoglutarate = 3-methyl-2-oxobutanoate + L-glutamate. It carries out the reaction a 2-oxocarboxylate + L-methionine = 4-methylsulfanyl-2-oxobutanoate + an L-alpha-amino acid. It functions in the pathway amino-acid biosynthesis; L-isoleucine biosynthesis; L-isoleucine from 2-oxobutanoate: step 4/4. It participates in amino-acid biosynthesis; L-leucine biosynthesis; L-leucine from 3-methyl-2-oxobutanoate: step 4/4. The protein operates within amino-acid biosynthesis; L-valine biosynthesis; L-valine from pyruvate: step 4/4. Its pathway is amino-acid biosynthesis; L-methionine biosynthesis via salvage pathway; L-methionine from S-methyl-5-thio-alpha-D-ribose 1-phosphate: step 6/6. In terms of biological role, mitochondrial isozyme of branched-chain-amino-acid aminotransferase, involved in the biosynthesis of the branched chain amino acids (BCAAs) leucine, isoleucine, and valine. Catalyzes the formation of methionine from 2-keto-4-methylthiobutyrate (KMTB) in the methionine salvage pathway primarily using BCAAs (leucine, isoleucine, and valine) as the amino donors. Appears to be involved in the regulation of the cell cycle, although this may be indirect via metabolic changes. Connects BCAAs and TCA-cycle metabolism governing TCA-cycle flux to activate TORC1 signaling. High copy suppressor of a temperature-sensitive mutation in the ABC transporter, ATM1. In Saccharomyces cerevisiae (strain ATCC 204508 / S288c) (Baker's yeast), this protein is Branched-chain-amino-acid aminotransferase, mitochondrial.